A 438-amino-acid polypeptide reads, in one-letter code: Transposon Ty2-OR2 Gag polyprotein (438 aa).

Disordered stretches follow at residues 1–88 (MESQ…YQQH), 365–397 (NVSR…AKAH), and 419–438 (SSQY…TERI). 2 stretches are compositionally biased toward polar residues: residues 19–39 (ASVT…SASN) and 49–60 (KVNSQEETTPGT). The interval 295–397 (ENNINVSDRL…SSKPRAAKAH (103 aa)) is RNA-binding. A compositionally biased stretch (low complexity) spans 369-381 (TSPNTTNTKVTTR).

Homotrimer.

It localises to the cytoplasm. In terms of biological role, capsid protein (CA) is the structural component of the virus-like particle (VLP), forming the shell that encapsulates the retrotransposons dimeric RNA genome. The particles are assembled from trimer-clustered units and there are holes in the capsid shells that allow for the diffusion of macromolecules. CA also has nucleocapsid-like chaperone activity, promoting primer tRNA(i)-Met annealing to the multipartite primer-binding site (PBS), dimerization of Ty2 RNA and initiation of reverse transcription. The protein is Transposon Ty2-OR2 Gag polyprotein (TY2A-OR2) of Saccharomyces cerevisiae (strain ATCC 204508 / S288c) (Baker's yeast).